The sequence spans 606 residues: Pro-secreted protein ORF2 (606 aa).

Residues 1-19 (MSLCRLLLMLAMCCGVSRG) form the signal peptide. Residues 22–54 (TLPAGGRRGQRRRDNSAQWSTQQRPEGAVGPAP) form a disordered region. The short motif at 28–34 (RRGQRRR) is the Nuclear localization signal element. A glycan (N-linked (GlcNAc...) asparagine; by host) is linked at asparagine 255. The particle formation stretch occupies residues 313 to 339 (ILGVLFNLADTVLGGLPSTLLRAASGQ). The N-linked (GlcNAc...) asparagine; by host glycan is linked to asparagine 510.

This sequence belongs to the hepevirus capsid protein family. As to quaternary structure, homodimer. Self-assembles to form the capsid. The capsid is dominated by dimers that define the 30 morphological units. Interacts with phosphorylated protein ORF3. N-glycosylated.

The protein resides in the secreted. It is found in the virion. It localises to the host cytoplasm. Its subcellular location is the host endoplasmic reticulum. The protein localises to the host Golgi apparatus. The protein resides in the host cell surface. It is found in the host nucleus. Its function is as follows. Plays a role in the inhibition of host antibody-mediated neutralization without blocking viral cell entry. In terms of biological role, forms an icosahedral capsid with a T=1 symmetry and a 34 nm diameter. The capsid is composed of 60 copies linked to each other. Binds to the 5' end of the genomic RNA to mediate genome encapsidation. The sequence is that of Pro-secreted protein ORF2 from Gallus gallus (Chicken).